The following is a 381-amino-acid chain: Alanine racemase, catabolic (381 aa).

K55 acts as the Proton acceptor; specific for D-alanine in catalysis. N6-(pyridoxal phosphate)lysine is present on K55. R154 contacts substrate. The Proton acceptor; specific for L-alanine role is filled by Y276. A substrate-binding site is contributed by M322.

The protein belongs to the alanine racemase family. The cofactor is pyridoxal 5'-phosphate.

The catalysed reaction is L-alanine = D-alanine. In terms of biological role, isomerizes L-alanine to D-alanine which is then oxidized to pyruvate by DadA. In Mesorhizobium japonicum (strain LMG 29417 / CECT 9101 / MAFF 303099) (Mesorhizobium loti (strain MAFF 303099)), this protein is Alanine racemase, catabolic (dadB).